The following is a 129-amino-acid chain: Putative F-box protein At3g42722 (129 aa).

The F-box domain maps to 4-50 (MASIDCLPDELLVGILSFILTNEAASTSILSKRWRTLFAFSHNLDCN).

This chain is Putative F-box protein At3g42722, found in Arabidopsis thaliana (Mouse-ear cress).